The following is a 121-amino-acid chain: Small ribosomal subunit protein bS16 (121 aa).

Over residues 97–114 the composition is skewed to basic and acidic residues; it reads LAKAKTKDEENDNSKVES. The interval 97 to 121 is disordered; it reads LAKAKTKDEENDNSKVESEGNEAES.

This sequence belongs to the bacterial ribosomal protein bS16 family.

This chain is Small ribosomal subunit protein bS16, found in Prochlorococcus marinus (strain AS9601).